A 514-amino-acid polypeptide reads, in one-letter code: Peptide chain release factor 3 (514 aa).

The tr-type G domain maps to 8-268 (KKRRTFAIIS…TFLKFAPEPH (261 aa)). GTP-binding positions include 17–24 (SHPDAGKT), 85–89 (DTPGH), and 139–142 (NKLD).

The protein belongs to the TRAFAC class translation factor GTPase superfamily. Classic translation factor GTPase family. PrfC subfamily.

The protein localises to the cytoplasm. Its function is as follows. Increases the formation of ribosomal termination complexes and stimulates activities of RF-1 and RF-2. It binds guanine nucleotides and has strong preference for UGA stop codons. It may interact directly with the ribosome. The stimulation of RF-1 and RF-2 is significantly reduced by GTP and GDP, but not by GMP. The chain is Peptide chain release factor 3 from Streptococcus pneumoniae serotype 19F (strain G54).